The sequence spans 101 residues: Small ribosomal subunit protein uS14 (101 aa).

The tract at residues 1–22 is disordered; the sequence is MAKVSSIKKNESRKKKSQSLHN. Basic residues predominate over residues 11-22; that stretch reads ESRKKKSQSLHN.

The protein belongs to the universal ribosomal protein uS14 family. Part of the 30S ribosomal subunit. Contacts proteins S3 and S10.

Functionally, binds 16S rRNA, required for the assembly of 30S particles and may also be responsible for determining the conformation of the 16S rRNA at the A site. This is Small ribosomal subunit protein uS14 from Rickettsia conorii (strain ATCC VR-613 / Malish 7).